We begin with the raw amino-acid sequence, 273 residues long: HMP-PP phosphatase (273 aa).

The active-site Nucleophile is Asp8. Mg(2+) contacts are provided by Asp8, Asp10, and Asp212.

This sequence belongs to the HAD-like hydrolase superfamily. Cof family. It depends on Mg(2+) as a cofactor.

It carries out the reaction 4-amino-2-methyl-5-(diphosphooxymethyl)pyrimidine + H2O = 4-amino-2-methyl-5-(phosphooxymethyl)pyrimidine + phosphate + H(+). Its function is as follows. Catalyzes the hydrolysis of 4-amino-2-methyl-5-hydroxymethylpyrimidine pyrophosphate (HMP-PP) to 4-amino-2-methyl-5-hydroxymethylpyrimidine phosphate (HMP-P). The protein is HMP-PP phosphatase of Yersinia pseudotuberculosis serotype O:1b (strain IP 31758).